A 225-amino-acid chain; its full sequence is Probable iron export ATP-binding protein FetA (225 aa).

The ABC transporter domain maps to 8–225 (LQLQNVGYLA…EMQEARYELA (218 aa)). 40 to 47 (GPSGCGKS) serves as a coordination point for ATP.

This sequence belongs to the ABC transporter superfamily. As to quaternary structure, the complex is composed of two ATP-binding proteins (FetA) and two transmembrane proteins (FetB).

The protein resides in the cell inner membrane. In terms of biological role, part of the ABC transporter complex FetAB, which is probably involved in iron export and enhances resistance to H(2)O(2)-mediated oxidative stress. Probably responsible for energy coupling to the transport system. The protein is Probable iron export ATP-binding protein FetA (fetA) of Escherichia coli (strain K12).